Here is an 897-residue protein sequence, read N- to C-terminus: N-terminal acetyltransferase A complex auxiliary subunit NAA15 (897 aa).

TPR repeat units lie at residues 77-110, 111-144, 189-222, 223-256, 298-331, 380-413, and 488-523; these read HVCW…DPDN, LEIL…KPNH, TEMI…IVDK, LSYK…NPDN, SSAV…KGVP, LWTL…TPTV, and QCMW…YADI. 2 disordered regions span residues 578–640 and 863–897; these read KSTA…DPHG and SRKS…SVAT. Positions 602–617 are enriched in basic and acidic residues; sequence KAEARAKKEAESKSEE. Positions 863 to 872 are enriched in polar residues; it reads SRKSNENGDT.

In terms of assembly, part of the NatA complex. Associates with ribosomes. Interacts with NAA10. In terms of tissue distribution, expressed in leaves, roots, shoots and flowers.

Its function is as follows. Auxiliary subunit of the NatA N-alpha-acetyltransferase complex. Required for male gametocyte development, embryogenesis, suspensor development and the formation of the quiescent center (QC) in the root meristem. Involved in plant immunity through the regulation of SNC1 stability. Required for embryo development. The chain is N-terminal acetyltransferase A complex auxiliary subunit NAA15 from Arabidopsis thaliana (Mouse-ear cress).